The primary structure comprises 286 residues: Aminoglycoside N(3)-acetyltransferase III (286 aa).

It belongs to the antibiotic N-acetyltransferase family.

The catalysed reaction is a 2-deoxystreptamine antibiotic + acetyl-CoA = an N(3)-acetyl-2-deoxystreptamine antibiotic + CoA + H(+). In terms of biological role, resistance to antibiotics containing the 2-deoxy-streptamine ring including gentamicin, kanamycin, tobramycin, neomycin and apramycin. In Salmonella sp, this protein is Aminoglycoside N(3)-acetyltransferase III (aacC3).